Consider the following 485-residue polypeptide: D-alanine--D-alanyl carrier protein ligase (485 aa).

144–145 (TS) contributes to the ATP binding site. Position 189 (aspartate 189) interacts with D-alanine. 284 to 289 (NTYGPT) serves as a coordination point for ATP. Residue valine 293 participates in D-alanine binding. Positions 365 and 473 each coordinate ATP. Lysine 473 lines the D-alanine pocket.

The protein belongs to the ATP-dependent AMP-binding enzyme family. DltA subfamily.

Its subcellular location is the cytoplasm. It carries out the reaction holo-[D-alanyl-carrier protein] + D-alanine + ATP = D-alanyl-[D-alanyl-carrier protein] + AMP + diphosphate. Its pathway is cell wall biogenesis; lipoteichoic acid biosynthesis. In terms of biological role, catalyzes the first step in the D-alanylation of lipoteichoic acid (LTA), the activation of D-alanine and its transfer onto the D-alanyl carrier protein (Dcp) DltC. In an ATP-dependent two-step reaction, forms a high energy D-alanyl-AMP intermediate, followed by transfer of the D-alanyl residue as a thiol ester to the phosphopantheinyl prosthetic group of the Dcp. D-alanylation of LTA plays an important role in modulating the properties of the cell wall in Gram-positive bacteria, influencing the net charge of the cell wall. This is D-alanine--D-alanyl carrier protein ligase from Staphylococcus aureus (strain Mu3 / ATCC 700698).